Here is a 352-residue protein sequence, read N- to C-terminus: RNA 3'-terminal phosphate cyclase (352 aa).

ATP contacts are provided by residues glutamine 102 and 292-296; that span reads HMGDQ. Histidine 318 functions as the Tele-AMP-histidine intermediate in the catalytic mechanism.

The protein belongs to the RNA 3'-terminal cyclase family. Type 1 subfamily.

The protein resides in the cytoplasm. The catalysed reaction is a 3'-end 3'-phospho-ribonucleotide-RNA + ATP = a 3'-end 2',3'-cyclophospho-ribonucleotide-RNA + AMP + diphosphate. Its function is as follows. Catalyzes the conversion of 3'-phosphate to a 2',3'-cyclic phosphodiester at the end of RNA. The mechanism of action of the enzyme occurs in 3 steps: (A) adenylation of the enzyme by ATP; (B) transfer of adenylate to an RNA-N3'P to produce RNA-N3'PP5'A; (C) and attack of the adjacent 2'-hydroxyl on the 3'-phosphorus in the diester linkage to produce the cyclic end product. The biological role of this enzyme is unknown but it is likely to function in some aspects of cellular RNA processing. The protein is RNA 3'-terminal phosphate cyclase of Methanopyrus kandleri (strain AV19 / DSM 6324 / JCM 9639 / NBRC 100938).